The primary structure comprises 241 residues: UPF0280 protein MK0206 (241 aa).

This sequence belongs to the UPF0280 family.

The sequence is that of UPF0280 protein MK0206 from Methanopyrus kandleri (strain AV19 / DSM 6324 / JCM 9639 / NBRC 100938).